A 316-amino-acid chain; its full sequence is Pantothenate kinase (316 aa).

95-102 (GSVAVGKS) is an ATP binding site.

This sequence belongs to the prokaryotic pantothenate kinase family.

The protein resides in the cytoplasm. The catalysed reaction is (R)-pantothenate + ATP = (R)-4'-phosphopantothenate + ADP + H(+). It functions in the pathway cofactor biosynthesis; coenzyme A biosynthesis; CoA from (R)-pantothenate: step 1/5. The protein is Pantothenate kinase of Yersinia pseudotuberculosis serotype O:3 (strain YPIII).